The following is a 508-amino-acid chain: MGLPWYRVHTVVLNDPGRLLSVHIMHTALVSGWAGSMALYELAVFDPSDPVLDPMWRQGMFVIPFMTRLGITNSWGGWSITGGTITNPGLWSYEGVAGAHIMFSGLCFLAAIWHWVYWDLEIFCDERTGKPSLDLPKIFGIHLFLSGLACFGFGAFHVTGLYGPGIWVSDPYGLTGKVQSVSPAWGAEGFDPFVPGGIASHHIAAGTLGILAGLFHLSVRPPQRLYKGLRMGNIETVLSSSIAAVFFAAFVVAGTMWYGSATTPIELFGPTRYQWDQGYFQQEIYRRVGNGLSENLSLSEAWSKIPEKLAFYDYIGNNPAKGGLFRAGSMDNGDGIAVGWLGHPVFRDNEGRELFVRRMPTFFETFPVVLVDGDGIVRADVPFRRAESKYSVEQVGVTVEFYGGELNGVSYSDPATVKKYARRAQLGEIFELDRATLKSDGVFRSSPRGWFTFGHASFALLFFFGHIWHGARTLFRDVFAGIDPDLDAQVEFGTFQKLGDPTTRRQVV.

6 helical membrane-spanning segments follow: residues 21-36, 101-115, 140-156, 203-218, 237-252, and 457-472; these read SVHIMHTALVSGWAGS, IMFSGLCFLAAIWHW, GIHLFLSGLACFGFGAF, IAAGTLGILAGLFHLS, VLSSSIAAVFFAAFVV, and SFALLFFFGHIWHGAR.

This sequence belongs to the PsbB/PsbC family. PsbB subfamily. As to quaternary structure, PSII is composed of 1 copy each of membrane proteins PsbA, PsbB, PsbC, PsbD, PsbE, PsbF, PsbH, PsbI, PsbJ, PsbK, PsbL, PsbM, PsbT, PsbX, PsbY, PsbZ, Psb30/Ycf12, at least 3 peripheral proteins of the oxygen-evolving complex and a large number of cofactors. It forms dimeric complexes. It depends on Binds multiple chlorophylls. PSII binds additional chlorophylls, carotenoids and specific lipids. as a cofactor.

The protein localises to the plastid. Its subcellular location is the chloroplast thylakoid membrane. Its function is as follows. One of the components of the core complex of photosystem II (PSII). It binds chlorophyll and helps catalyze the primary light-induced photochemical processes of PSII. PSII is a light-driven water:plastoquinone oxidoreductase, using light energy to abstract electrons from H(2)O, generating O(2) and a proton gradient subsequently used for ATP formation. The protein is Photosystem II CP47 reaction center protein of Ceratophyllum demersum (Rigid hornwort).